Here is a 596-residue protein sequence, read N- to C-terminus: Alkaline phosphatase 4 (596 aa).

The N-terminal stretch at 1-20 is a signal peptide; it reads MHCLVILGFLLGSLVAFSWA. D93 lines the Mg(2+) pocket. D93 contacts Zn(2+). The active-site Phosphoserine intermediate is the S144. Residues H202 and T204 each contribute to the Mg(2+) site. N-linked (GlcNAc...) asparagine glycans are attached at residues N262 and N297. Mg(2+) is bound at residue E369. Zn(2+) contacts are provided by D374 and H378. A glycan (N-linked (GlcNAc...) asparagine) is linked at N401. 2 residues coordinate Zn(2+): D415 and H416. 2 N-linked (GlcNAc...) asparagine glycosylation sites follow: N464 and N470. H504 is a binding site for Zn(2+). An intrachain disulfide couples C539 to C550. The span at 548-566 shows a compositional bias: basic and acidic residues; that stretch reads DSCEDHKDGQKDRPLDKPN. The disordered stretch occupies residues 548-570; that stretch reads DSCEDHKDGQKDRPLDKPNPKRN. N570 carries GPI-anchor amidated asparagine lipidation. A helical membrane pass occupies residues 571-591; sequence GATVVGASLIPILTAATAAIL. A propeptide spans 571–596 (removed in mature form); it reads GATVVGASLIPILTAATAAILRGRGL.

Belongs to the alkaline phosphatase family. As to quaternary structure, homodimer. Mg(2+) is required as a cofactor. Zn(2+) serves as cofactor. As to expression, ellipsoid body ring neurons in the adult brain and in the lower Malpighian tubule and ureter.

The protein localises to the cell membrane. It catalyses the reaction a phosphate monoester + H2O = an alcohol + phosphate. Its function is as follows. Important role in neural and renal epithelial function. The sequence is that of Alkaline phosphatase 4 from Drosophila melanogaster (Fruit fly).